Reading from the N-terminus, the 86-residue chain is 4-hydroxyphenylacetate decarboxylase small subunit (86 aa).

[4Fe-4S] cluster is bound by residues His3, Cys6, Cys19, Cys36, Cys45, Cys48, Cys62, and Cys80.

Belongs to the HPA decarboxylase small subunit family. Heterooctamer consisting of 4 large (HpdB) subunits and 4 small (HpdC) subunits, arranged as a tetramer of heterodimers. It depends on [4Fe-4S] cluster as a cofactor.

It carries out the reaction 4-hydroxyphenylacetate + H(+) = 4-methylphenol + CO2. It catalyses the reaction 3,4-dihydroxyphenylacetate + H(+) = 4-methylcatechol + CO2. Component of the HPA decarboxylase that decarboxylates phenylacetates with a hydroxyl group in the p-position. Active toward 4-hydroxyphenylacetate and 3,4-dihydroxyphenylacetate, forming 4-methylphenol and 4-methylcatechol, respectively. Is likely involved in the catabolism of aromatic amino acids such as tyrosine fermentation. 4-methylphenol (p-cresol) formation provides metabolic toxicity, which allows an active suppression of other microbes and may provide growth advantages for the producers in highly competitive environments. The small subunit is essential for enzymatic activity of HPA decarboxylase, and also seems to be involved in the regulation of the enzyme oligomeric state and catalytic activity. The sequence is that of 4-hydroxyphenylacetate decarboxylase small subunit from Clostridium scatologenes.